Reading from the N-terminus, the 158-residue chain is GTP-dependent dephospho-CoA kinase (158 aa).

Positions 35, 36, 54, 56, 109, and 132 each coordinate GTP.

This sequence belongs to the GTP-dependent DPCK family.

It carries out the reaction 3'-dephospho-CoA + GTP = GDP + CoA + H(+). It participates in cofactor biosynthesis; coenzyme A biosynthesis. Its function is as follows. Catalyzes the GTP-dependent phosphorylation of the 3'-hydroxyl group of dephosphocoenzyme A to form coenzyme A (CoA). This chain is GTP-dependent dephospho-CoA kinase, found in Methanococcus maripaludis (strain DSM 14266 / JCM 13030 / NBRC 101832 / S2 / LL).